A 58-amino-acid chain; its full sequence is U11-ctenitoxin-Pn1b (58 aa).

5 disulfides stabilise this stretch: cysteine 2-cysteine 16, cysteine 9-cysteine 22, cysteine 15-cysteine 40, cysteine 24-cysteine 38, and cysteine 48-cysteine 55.

In terms of tissue distribution, expressed by the venom gland.

It localises to the secreted. Functionally, non-toxic to mice. This Phoneutria nigriventer (Brazilian armed spider) protein is U11-ctenitoxin-Pn1b.